The chain runs to 342 residues: tRNA dimethylallyltransferase (342 aa).

Residue 39–46 coordinates ATP; the sequence is GPTGSGKT. 41-46 contacts substrate; it reads TGSGKT. Residues 64–67 are interaction with substrate tRNA; the sequence is DSMQ.

It belongs to the IPP transferase family. Monomer. It depends on Mg(2+) as a cofactor.

The catalysed reaction is adenosine(37) in tRNA + dimethylallyl diphosphate = N(6)-dimethylallyladenosine(37) in tRNA + diphosphate. In terms of biological role, catalyzes the transfer of a dimethylallyl group onto the adenine at position 37 in tRNAs that read codons beginning with uridine, leading to the formation of N6-(dimethylallyl)adenosine (i(6)A). The protein is tRNA dimethylallyltransferase of Chlamydia abortus (strain DSM 27085 / S26/3) (Chlamydophila abortus).